The chain runs to 346 residues: Structure-specific endonuclease subunit SLX1 (346 aa).

The 83-residue stretch at 10–92 (ALYCVYILRS…TNPHTSLHIP (83 aa)) folds into the GIY-YIG domain. An SLX1-type zinc finger spans residues 238-296 (CVVCKEEIDPEEGGLHAVCSNEGCEGVGHLRCWGRYLLKSEEGGGEGAILPVGGRCPRC). Positions 324–336 (KVKRKRAPRKKTA) are enriched in basic residues. The interval 324 to 346 (KVKRKRAPRKKTAKTKETREEDG) is disordered. Over residues 337 to 346 (KTKETREEDG) the composition is skewed to basic and acidic residues.

It belongs to the SLX1 family. In terms of assembly, forms a heterodimer with SLX4. It depends on a divalent metal cation as a cofactor.

It localises to the nucleus. In terms of biological role, catalytic subunit of the SLX1-SLX4 structure-specific endonuclease that resolves DNA secondary structures generated during DNA repair and recombination. Has endonuclease activity towards branched DNA substrates, introducing single-strand cuts in duplex DNA close to junctions with ss-DNA. The sequence is that of Structure-specific endonuclease subunit SLX1 from Podospora anserina (strain S / ATCC MYA-4624 / DSM 980 / FGSC 10383) (Pleurage anserina).